Here is a 432-residue protein sequence, read N- to C-terminus: Cyclic GMP-AMP synthase (432 aa).

110–115 (QGSFQY) is a binding site for GTP. Residues D129 and D131 each coordinate Mg(2+). Position 180 (R180) interacts with ATP. D191 serves as a coordination point for Mg(2+). S255 serves as a coordination point for ATP. Positions 283, 297, and 344 each coordinate GTP. Residues 413 to 432 (LNAPSKEPSSKPINKTMVSG) are disordered. A compositionally biased stretch (polar residues) spans 423–432 (KPINKTMVSG).

Belongs to the CD-NTase family. A01 subfamily. The cofactor is Mg(2+).

The catalysed reaction is GTP + ATP = 3',3'-cGAMP + 2 diphosphate. Functionally, cyclic nucleotide synthase (second messenger synthase) of a CBASS antivirus system. CBASS (cyclic oligonucleotide-based antiphage signaling system) provides immunity against bacteriophage. The CD-NTase protein synthesizes cyclic nucleotides in response to infection; these serve as specific second messenger signals. The signals activate a diverse range of effectors, leading to bacterial cell death and thus abortive phage infection. A type II-C(GA) CBASS system. In terms of biological role, catalyzes the synthesis of 3'3'-cyclic GMP-AMP (3'3'-cGAMP) from GTP and ATP, a second messenger in cell signal transduction. Is also able to produce c-di-AMP and c-di-GMP from ATP and GTP, respectively; however, 3'3'-cGAMP is the dominant molecule produced by DncV in vivo, contrary to the 2'3'-cGAMP produced by eukaryotes. By producing cGAMP, down-regulates csgD expression and expression of flagellum regulon genes, which leads to the down-regulation of rdar biofilm formation and flagellum-mediated swimming and swarming motility in a temperature-dependent manner. Controls the activity of cGAMP-activated phospholipase CapV, a patatin-like lipase that is a direct 3',3'-cGAMP receptor encoded in the dncV operon. This is Cyclic GMP-AMP synthase from Escherichia coli.